A 677-amino-acid polypeptide reads, in one-letter code: Probable serine/threonine-protein kinase mkcF (677 aa).

Positions 1–58 (MLYLVATGDYKGPSENHLSFTKGQRIEFLERTENGFIKGKLDGKVGIFPSSLITIETR) constitute an SH3 domain. The interval 72 to 244 (TETKDDTGSI…SSSSSSTKRR (173 aa)) is disordered. Residues 79 to 94 (GSISSSTSTSTSSLTT) show a composition bias toward low complexity. A compositionally biased stretch (polar residues) spans 105–126 (GEQQPSTSTINGQSSSTSPILQ). The segment covering 127–146 (SNGTTNTTTSSTSNNNIGDN) has biased composition (low complexity). The span at 158–174 (TTSNHSKSASRLSVASF) shows a compositional bias: polar residues. A compositionally biased stretch (low complexity) spans 175 to 192 (STTTTATTTTTTTTTATS). Residues 209–224 (DKKSKDDDKSEKEGLY) show a composition bias toward basic and acidic residues. Low complexity predominate over residues 230 to 240 (SSSSSSSSSSS). The Protein kinase domain maps to 401 to 646 (IKFTHMVGRG…VDKLMRHPFF (246 aa)). Residues 407 to 415 (VGRGQYGKV) and Lys-428 contribute to the ATP site. Asp-519 acts as the Proton acceptor in catalysis.

It belongs to the protein kinase superfamily. Ser/Thr protein kinase family. STE20 subfamily. It depends on Mg(2+) as a cofactor.

It carries out the reaction L-seryl-[protein] + ATP = O-phospho-L-seryl-[protein] + ADP + H(+). It catalyses the reaction L-threonyl-[protein] + ATP = O-phospho-L-threonyl-[protein] + ADP + H(+). The polypeptide is Probable serine/threonine-protein kinase mkcF (Dictyostelium discoideum (Social amoeba)).